Consider the following 122-residue polypeptide: uncharacterized protein (122 aa).

The span at 1–15 (MAEPGGRGDYHKDGR) shows a compositional bias: basic and acidic residues. Residues 1–26 (MAEPGGRGDYHKDGRPPSLSRSPLFT) are disordered.

This is an uncharacterized protein from Macaca fascicularis (Crab-eating macaque).